The primary structure comprises 369 residues: Histidinol-phosphate aminotransferase 2 (369 aa).

Lysine 231 is subject to N6-(pyridoxal phosphate)lysine.

It belongs to the class-II pyridoxal-phosphate-dependent aminotransferase family. Histidinol-phosphate aminotransferase subfamily. In terms of assembly, homodimer. Pyridoxal 5'-phosphate serves as cofactor.

The enzyme catalyses L-histidinol phosphate + 2-oxoglutarate = 3-(imidazol-4-yl)-2-oxopropyl phosphate + L-glutamate. Its pathway is amino-acid biosynthesis; L-histidine biosynthesis; L-histidine from 5-phospho-alpha-D-ribose 1-diphosphate: step 7/9. This is Histidinol-phosphate aminotransferase 2 from Legionella pneumophila (strain Lens).